The primary structure comprises 369 residues: Deoxyuridine 5'-triphosphate nucleotidohydrolase (369 aa).

Residues 258–260 and 364–365 each bind substrate; these read RSS and FG.

The protein belongs to the dUTPase family. Requires Mg(2+) as cofactor.

The enzyme catalyses dUTP + H2O = dUMP + diphosphate + H(+). Involved in nucleotide metabolism: produces dUMP, the immediate precursor of thymidine nucleotides and decreases the intracellular concentration of dUTP to avoid uracil incorporation into viral DNA. The polypeptide is Deoxyuridine 5'-triphosphate nucleotidohydrolase (Homo sapiens (Human)).